The chain runs to 199 residues: Probable chemoreceptor glutamine deamidase CheD (199 aa).

It belongs to the CheD family.

The enzyme catalyses L-glutaminyl-[protein] + H2O = L-glutamyl-[protein] + NH4(+). Its function is as follows. Probably deamidates glutamine residues to glutamate on methyl-accepting chemotaxis receptors (MCPs), playing an important role in chemotaxis. This Cereibacter sphaeroides (strain ATCC 17025 / ATH 2.4.3) (Rhodobacter sphaeroides) protein is Probable chemoreceptor glutamine deamidase CheD.